The primary structure comprises 672 residues: Single-strand DNA endonuclease ASTE1 (672 aa).

The tract at residues 349-398 is interaction with SHLD2; it reads TFLHTQVENMQRPNAHRISQPIRQIIYGLLLNGPSHAEDIAQNTLPSQLL.

Belongs to the asteroid family. Interacts with SHLD1, SHLD2, SHLD3, RIF1 and MAD2L2/REV7.

Functionally, structure-specific DNA endonuclease that specifically cleaves single-stranded DNA and 3' overhang DNA. Contributes to the control of DNA double-strand break repair choice by antagonizing BRCA1-dependent homologous recombination (HR) and promoting non-homologous end-joining (NHEJ). Recruited to the single-stranded DNA ends by SHLD2 and cleaves the 3' exposed DNA ends, therefore inhibiting DNA end resection (necessary for HR) and promoting DNA end protection (necessary for NHEJ). This Mus musculus (Mouse) protein is Single-strand DNA endonuclease ASTE1 (Aste1).